The following is a 177-amino-acid chain: MSRVGKKPVPVPSGVTATVTGQTVKVKGSKGELQFVVPSQVVVEFKDGAVSVQPKDQSKQARSLWGTSRAQVANLVEGVSKGFEKKLEITGVGYRAAMAGKALKLSLGYSHDIEYEIPAGITIVTPKPTEIVVSGIDRQRVGQVAAEIREYRGPEPYKGKGVKYAGEFIFRKEGKKK.

It belongs to the universal ribosomal protein uL6 family. Part of the 50S ribosomal subunit.

Functionally, this protein binds to the 23S rRNA, and is important in its secondary structure. It is located near the subunit interface in the base of the L7/L12 stalk, and near the tRNA binding site of the peptidyltransferase center. The sequence is that of Large ribosomal subunit protein uL6 from Methylorubrum extorquens (strain CM4 / NCIMB 13688) (Methylobacterium extorquens).